The chain runs to 313 residues: Olfactory receptor 1J4 (313 aa).

Residues 1 to 25 are Extracellular-facing; sequence MKRENQSSVSEFLLLDLPIWPEQQA. N-linked (GlcNAc...) asparagine glycosylation is present at N5. Residues 26 to 49 traverse the membrane as a helical segment; sequence VFFTLFLGMYLITVLGNLLIILLI. The Cytoplasmic segment spans residues 50–57; that stretch reads RLDSHLHT. Residues 58 to 79 traverse the membrane as a helical segment; it reads PMFFFLSHLALTDISLSSVTVP. Residues 80–100 lie on the Extracellular side of the membrane; the sequence is KMLLSMQTQDQSILYAGCVTQ. A disulfide bridge links C97 with C189. The chain crosses the membrane as a helical span at residues 101 to 120; it reads MYFFIFFTDLDNFLLTSMAY. At 121–139 the chain is on the cytoplasmic side; it reads DRYVAICHPLRYTTIMKEG. Residues 140–158 form a helical membrane-spanning segment; that stretch reads LCNLLVTVSWILSCTNALS. Over 159 to 195 the chain is Extracellular; sequence HTLLLAQLSFCADNTIPHFFCDLVALLKLSCSDISLN. A helical membrane pass occupies residues 196 to 219; sequence ELVIFTVGQAVITLPLICILISYG. Residues 220-236 are Cytoplasmic-facing; it reads HIGVTILKAPSTKGIFK. The chain crosses the membrane as a helical span at residues 237-259; that stretch reads ALSTCGSHLSVVSLYYGTIIGLY. The Extracellular segment spans residues 260–272; it reads FLPSSSASSDKDV. The helical transmembrane segment at 273-292 threads the bilayer; it reads IASVMYTVITPLLNPFIYSL. Topologically, residues 293 to 313 are cytoplasmic; the sequence is RNRDIKGALERLFNRATVLSQ.

This sequence belongs to the G-protein coupled receptor 1 family.

It localises to the cell membrane. Its function is as follows. Odorant receptor. The chain is Olfactory receptor 1J4 (OR1J4) from Homo sapiens (Human).